The chain runs to 375 residues: GDP-mannose-dependent alpha-mannosyltransferase (375 aa).

It belongs to the glycosyltransferase group 1 family. Glycosyltransferase 4 subfamily.

It functions in the pathway phospholipid metabolism; phosphatidylinositol metabolism. Its function is as follows. Catalyzes the addition of a mannose residue from GDP-D-mannose to GlcAGroAc2 to generate 1,2-di-O-C16/C18:1-(alpha-D-mannopyranosyl)-(1-4)-(alpha-D-glucopyranosyluronic acid)-(1-3)-glycerol(ManGlcAGroAc2). This is GDP-mannose-dependent alpha-mannosyltransferase (mgtA) from Mycolicibacterium smegmatis (strain ATCC 700084 / mc(2)155) (Mycobacterium smegmatis).